Reading from the N-terminus, the 604-residue chain is Aspartate--tRNA(Asp/Asn) ligase (604 aa).

Glutamate 175 is an L-aspartate binding site. The segment at 199-202 is aspartate; it reads QQFK. L-aspartate contacts are provided by arginine 221 and histidine 456. ATP is bound at residue 221–223; the sequence is RDE. ATP is bound at residue glutamate 496. Residue arginine 503 coordinates L-aspartate. 548–551 is a binding site for ATP; sequence GVDR.

This sequence belongs to the class-II aminoacyl-tRNA synthetase family. Type 1 subfamily. Homodimer.

Its subcellular location is the cytoplasm. The enzyme catalyses tRNA(Asx) + L-aspartate + ATP = L-aspartyl-tRNA(Asx) + AMP + diphosphate. Aspartyl-tRNA synthetase with relaxed tRNA specificity since it is able to aspartylate not only its cognate tRNA(Asp) but also tRNA(Asn). Reaction proceeds in two steps: L-aspartate is first activated by ATP to form Asp-AMP and then transferred to the acceptor end of tRNA(Asp/Asn). The chain is Aspartate--tRNA(Asp/Asn) ligase from Methylorubrum populi (strain ATCC BAA-705 / NCIMB 13946 / BJ001) (Methylobacterium populi).